A 64-amino-acid chain; its full sequence is Large ribosomal subunit protein bL35 (64 aa).

Belongs to the bacterial ribosomal protein bL35 family.

This chain is Large ribosomal subunit protein bL35, found in Vibrio parahaemolyticus serotype O3:K6 (strain RIMD 2210633).